The chain runs to 103 residues: Protamine-2 (103 aa).

The disordered stretch occupies residues 1–103 (MVRYRMRSLS…RTRRRRCRRY (103 aa)). Phosphoserine occurs at positions 8 and 10. Positions 8–17 (SLSERPHEVH) are enriched in basic and acidic residues. The span at 23–35 (GQEQGHNGQEEQG) shows a compositional bias: low complexity. Residue Ser37 is modified to Phosphoserine. Residues 39 to 48 (EHVEVYERTH) show a composition bias toward basic and acidic residues. Basic residues predominate over residues 51–103 (YSHHRRRRCSRRRLYRIHRRRHRSCRRRRRRSCRHRRRHRRGCRTRRRRCRRY).

This sequence belongs to the protamine P2 family. As to quaternary structure, interacts with TDRP. Post-translationally, proteolytic processing into mature chains is required for histone eviction during spermatogenesis. Transition proteins (TNP1 and TNP2) are required for processing. Testis.

The protein localises to the nucleus. It localises to the chromosome. Protamines substitute for histones in the chromatin of sperm during the haploid phase of spermatogenesis. They compact sperm DNA into a highly condensed, stable and inactive complex. The sequence is that of Protamine-2 (PRM2) from Semnopithecus entellus (Northern plains gray langur).